Consider the following 169-residue polypeptide: Ribosome maturation factor RimM (169 aa).

A PRC barrel domain is found at Asp94 to Leu168.

The protein belongs to the RimM family. In terms of assembly, binds ribosomal protein uS19.

The protein localises to the cytoplasm. Its function is as follows. An accessory protein needed during the final step in the assembly of 30S ribosomal subunit, possibly for assembly of the head region. Essential for efficient processing of 16S rRNA. May be needed both before and after RbfA during the maturation of 16S rRNA. It has affinity for free ribosomal 30S subunits but not for 70S ribosomes. This Cereibacter sphaeroides (strain ATCC 17025 / ATH 2.4.3) (Rhodobacter sphaeroides) protein is Ribosome maturation factor RimM.